Consider the following 249-residue polypeptide: MRRKIIAANWKMYKTCAETESFIKEFKELSKGYEEKEIVICPPFTSLYVANKLLEDTPIKLGAQNMFWEKEGAYTGEISPIMLKDLNCSYVIIGHSERRQYFSETNDMINKKLKSAFEYELIPIFCVGEKWEEREKGKTEEVITEQVKKGLQGLEKEKVEKIVIAYEPVWAIGTGHSAKGEDANEVAKLIRRIISEIYDEEVSQKVRIQYGGSVNPQNIKEFLAQSEIDGALVGGASLKPQSFWDIVRS.

A substrate-binding site is contributed by 9 to 11; it reads NWK. Catalysis depends on His95, which acts as the Electrophile. Glu167 functions as the Proton acceptor in the catalytic mechanism. Substrate-binding positions include Gly173, Ser213, and 234-235; that span reads GG.

Belongs to the triosephosphate isomerase family. Homodimer.

The protein localises to the cytoplasm. It carries out the reaction D-glyceraldehyde 3-phosphate = dihydroxyacetone phosphate. It participates in carbohydrate biosynthesis; gluconeogenesis. The protein operates within carbohydrate degradation; glycolysis; D-glyceraldehyde 3-phosphate from glycerone phosphate: step 1/1. Its function is as follows. Involved in the gluconeogenesis. Catalyzes stereospecifically the conversion of dihydroxyacetone phosphate (DHAP) to D-glyceraldehyde-3-phosphate (G3P). This Dictyoglomus turgidum (strain DSM 6724 / Z-1310) protein is Triosephosphate isomerase.